Consider the following 681-residue polypeptide: MSKGILQVHPPICDCPGCRISSPVNRGRLADKRTVALPAARNLKKERTPSFSASDGDSDGSGPTCGRRPGLKQEDGPHIRIMKRRVHTHWDVNISFREASCSQDGNLPTLISSVHRSRHLVMPEHQSRCEFQRGSLEIGLRPAGDLLGKRLGRSPRISSDCFSEKRARSESPQEALLLPRELGPSMAPEDHYRRLVSALSEASTFEDPQRLYHLGLPSHGEDPPWHDPPHHLPSHDLLRVRQEVAAAALRGPSGLEAHLPSSTAGQRRKQGLAQHREGAAPAAAPSFSERELPQPPPLLSPQNAPHVALGPHLRPPFLGVPSALCQTPGYGFLPPAQAEMFAWQQELLRKQNLARLELPADLLRQKELESARPQLLAPETALRPNDGAEELQRRGALLVLNHGAAPLLALPPQGPPGSGPPTPSRDSARRAPRKGGPGPASARPSESKEMTGARLWAQDGSEDEPPKDSDGEDPETAAVGCRGPTPGQAPAGGAGAEGKGLFPGSTLPLGFPYAVSPYFHTGAVGGLSMDGEEAPAPEDVTKWTVDDVCSFVGGLSGCGEYTRVFREQGIDGETLPLLTEEHLLTNMGLKLGPALKIRAQVARRLGRVFYVASFPVALPLQPPTLRAPERELGTGEQPLSPTTATSPYGGGHALAGQTSPKQENGTLALLPGAPDPSQPLC.

4 disordered regions span residues 41–77 (RNLK…EDGP), 212–234 (YHLG…HLPS), 251–307 (GPSG…APHV), and 407–498 (LLAL…GAEG). Lys72 participates in a covalent cross-link: Glycyl lysine isopeptide (Lys-Gly) (interchain with G-Cter in SUMO2). Over residues 219–234 (HGEDPPWHDPPHHLPS) the composition is skewed to basic and acidic residues. The span at 412-423 (PQGPPGSGPPTP) shows a compositional bias: pro residues. The residue at position 485 (Thr485) is a Phosphothreonine. The SAM domain maps to 543 to 608 (WTVDDVCSFV…AQVARRLGRV (66 aa)). The tract at residues 625 to 681 (LRAPERELGTGEQPLSPTTATSPYGGGHALAGQTSPKQENGTLALLPGAPDPSQPLC) is disordered. Composition is skewed to polar residues over residues 637–646 (QPLSPTTATS) and 656–665 (GQTSPKQENG). Ser640 carries the post-translational modification Phosphoserine.

Self-associates. Component of a Polycomb group (PcG) multiprotein PRC1-like complex. Interacts with SAMD7 and PHC2. In terms of tissue distribution, expressed in the outer and inner nuclear layers, ganglion cell layer and rod photoreceptors of the retina (at protein level). Widely expressed, showing the highest expression in kidney, prostate and retina.

The protein resides in the nucleus. In terms of biological role, component of a Polycomb group (PcG) multiprotein PRC1-like complex, essential for establishing rod photoreceptor cell identity and function by silencing nonrod gene expression in developing rod photoreceptor cells. The chain is Sterile alpha motif domain-containing protein 11 (SAMD11) from Homo sapiens (Human).